A 245-amino-acid polypeptide reads, in one-letter code: 1-(5-phosphoribosyl)-5-[(5-phosphoribosylamino)methylideneamino] imidazole-4-carboxamide isomerase (245 aa).

Catalysis depends on Asp-7, which acts as the Proton acceptor. Asp-129 (proton donor) is an active-site residue.

The protein belongs to the HisA/HisF family.

It is found in the cytoplasm. It catalyses the reaction 1-(5-phospho-beta-D-ribosyl)-5-[(5-phospho-beta-D-ribosylamino)methylideneamino]imidazole-4-carboxamide = 5-[(5-phospho-1-deoxy-D-ribulos-1-ylimino)methylamino]-1-(5-phospho-beta-D-ribosyl)imidazole-4-carboxamide. It functions in the pathway amino-acid biosynthesis; L-histidine biosynthesis; L-histidine from 5-phospho-alpha-D-ribose 1-diphosphate: step 4/9. The polypeptide is 1-(5-phosphoribosyl)-5-[(5-phosphoribosylamino)methylideneamino] imidazole-4-carboxamide isomerase (Shewanella baltica (strain OS155 / ATCC BAA-1091)).